The sequence spans 63 residues: Large ribosomal subunit protein bL28 (63 aa).

Belongs to the bacterial ribosomal protein bL28 family.

The protein is Large ribosomal subunit protein bL28 of Clostridium kluyveri (strain NBRC 12016).